A 258-amino-acid polypeptide reads, in one-letter code: UPF0246 protein YaaA (258 aa).

This sequence belongs to the UPF0246 family.

This chain is UPF0246 protein YaaA, found in Shigella dysenteriae serotype 1 (strain Sd197).